Reading from the N-terminus, the 395-residue chain is S-adenosylmethionine synthase (395 aa).

His-14 contacts ATP. Asp-16 provides a ligand contact to Mg(2+). Position 42 (Glu-42) interacts with K(+). L-methionine contacts are provided by Glu-55 and Gln-98. A flexible loop region spans residues 98–108 (QSPDIALGVDK). ATP-binding positions include 174-176 (DGK), 240-241 (RF), Asp-249, 255-256 (RK), Ala-272, and Lys-276. Asp-249 lines the L-methionine pocket. An L-methionine-binding site is contributed by Lys-280.

The protein belongs to the AdoMet synthase family. Homotetramer; dimer of dimers. Mg(2+) serves as cofactor. The cofactor is K(+).

Its subcellular location is the cytoplasm. The enzyme catalyses L-methionine + ATP + H2O = S-adenosyl-L-methionine + phosphate + diphosphate. The protein operates within amino-acid biosynthesis; S-adenosyl-L-methionine biosynthesis; S-adenosyl-L-methionine from L-methionine: step 1/1. Its function is as follows. Catalyzes the formation of S-adenosylmethionine (AdoMet) from methionine and ATP. The overall synthetic reaction is composed of two sequential steps, AdoMet formation and the subsequent tripolyphosphate hydrolysis which occurs prior to release of AdoMet from the enzyme. This is S-adenosylmethionine synthase from Thermotoga maritima (strain ATCC 43589 / DSM 3109 / JCM 10099 / NBRC 100826 / MSB8).